The primary structure comprises 470 residues: MSAKTLYDKLWESHVVHTEQDGGVLLYIDRQLLHEVTSPQAFSGLRAAGRKAWRIDANIATADHNVPTTDRAAGIADATSRLQVDTLDRNCAEFGIEEFGMHDKRQGIVHVIAPEQGLTLPGMTVVCGDSHTATHGALGALAFGIGTTEVEHVLATQCLWARKSRSMRIWVEGELGNGVTAKDLVLAIIGRIGTAGGTGYAIEFAGPAVHALSVEGRMTLCNMAIEAGARSGMVGVDAVTIDYLRGRPYAPVGKIWDQAVAVWGELHSDPDAQFDAEIRLEATDVAPQVTWGTSPEMVVDISARVPDPALEKDPVRRKGWSDALAYMDLAAATPISSIALDKVFIGSCTNARIEDLRAAAAVARGHHKAASVKAVLVVPGSGLVKAQAEAEGLDRIFRDAGFEWREPGCSMCLAMNADRLEPGERCASTSNRNFEGRQGAGGRTHLVSPAMAAAAAIAGHFVDVRDWIMH.

[4Fe-4S] cluster-binding residues include C348, C409, and C412.

Belongs to the aconitase/IPM isomerase family. LeuC type 1 subfamily. Heterodimer of LeuC and LeuD. It depends on [4Fe-4S] cluster as a cofactor.

It carries out the reaction (2R,3S)-3-isopropylmalate = (2S)-2-isopropylmalate. Its pathway is amino-acid biosynthesis; L-leucine biosynthesis; L-leucine from 3-methyl-2-oxobutanoate: step 2/4. Catalyzes the isomerization between 2-isopropylmalate and 3-isopropylmalate, via the formation of 2-isopropylmaleate. This Acidithiobacillus ferrooxidans (strain ATCC 23270 / DSM 14882 / CIP 104768 / NCIMB 8455) (Ferrobacillus ferrooxidans (strain ATCC 23270)) protein is 3-isopropylmalate dehydratase large subunit.